The chain runs to 977 residues: Glutamate receptor 2 (977 aa).

Residues 1–19 (MNKNLLVFGFLIFVKIGET) form the signal peptide. Over 20–621 (SKKFPLRAFV…FSFMEPLGMT (602 aa)) the chain is Extracellular. N-linked (GlcNAc...) asparagine glycosylation is found at asparagine 36, asparagine 227, asparagine 291, asparagine 427, asparagine 532, and asparagine 566. Residues 622–642 (IWIFTLSSYFGVSLTIFLVSW) form a helical membrane-spanning segment. The Cytoplasmic segment spans residues 643 to 695 (FSPYEKRIEFKRGEFTVTNEFTLYNSLWFTLAAFMQQGTDILPRAVSGRIASS). The helical transmembrane segment at 696 to 716 (CWWFFTLIIVSSYTANLAAFL) threads the bilayer. Topologically, residues 717-898 (TLERMTPPIE…GTSSSLNLSK (182 aa)) are extracellular. Asparagine 783 and asparagine 895 each carry an N-linked (GlcNAc...) asparagine glycan. The chain crosses the membrane as a helical span at residues 899–919 (VAGIFYILLAGMVLSMCTALV). Over 920–977 (EFLFRKNKENREKERNRMRSSRPLKPGILASCERAKQKQLQNRRTKSEEVSTPRSTLF) the chain is Cytoplasmic. A disordered region spans residues 954 to 977 (AKQKQLQNRRTKSEEVSTPRSTLF).

It belongs to the glutamate-gated ion channel (TC 1.A.10.1) family. As to expression, command interneurons of the locomotory control circuit (AIA, AIB, AVA, AVD, AVE, PVC, RIA, RIG and RIR) and motor neurons (AVG, M1, RMDD and RMDV).

Its subcellular location is the membrane. It localises to the postsynaptic cell membrane. L-glutamate acts as an excitatory neurotransmitter at many synapses in the central nervous system. The postsynaptic actions of glutamate are mediated by a variety of receptors that are named according to their selective agonists. Required for response to mechanical and osmotic stimuli. This Caenorhabditis elegans protein is Glutamate receptor 2 (glr-2).